The following is an 87-amino-acid chain: Small ribosomal subunit protein bS20 (87 aa).

It belongs to the bacterial ribosomal protein bS20 family.

In terms of biological role, binds directly to 16S ribosomal RNA. This chain is Small ribosomal subunit protein bS20, found in Brachyspira hyodysenteriae (strain ATCC 49526 / WA1).